Consider the following 719-residue polypeptide: Photosystem I P700 chlorophyll a apoprotein A1 (719 aa).

Transmembrane regions (helical) follow at residues isoleucine 60–alanine 83, leucine 146–histidine 169, leucine 185–leucine 209, threonine 281–tyrosine 299, tryptophan 336–tyrosine 359, leucine 375–valine 401, alanine 423–histidine 445, and phenylalanine 521–leucine 539. 2 residues coordinate [4Fe-4S] cluster: cysteine 563 and cysteine 572. The next 2 membrane-spanning stretches (helical) occupy residues histidine 579 to tryptophan 600 and leucine 654 to phenylalanine 676. Histidine 665 contacts chlorophyll a'. 2 residues coordinate chlorophyll a: methionine 673 and tyrosine 681. Tryptophan 682 lines the phylloquinone pocket. The chain crosses the membrane as a helical span at residues alanine 714–histidine 719.

Belongs to the PsaA/PsaB family. The PsaA/B heterodimer binds the P700 chlorophyll special pair and subsequent electron acceptors. PSI consists of a core antenna complex that captures photons, and an electron transfer chain that converts photonic excitation into a charge separation. The eukaryotic PSI reaction center is composed of at least 11 subunits. P700 is a chlorophyll a/chlorophyll a' dimer, A0 is one or more chlorophyll a, A1 is one or both phylloquinones and FX is a shared 4Fe-4S iron-sulfur center. serves as cofactor.

It localises to the plastid. The protein resides in the chloroplast thylakoid membrane. The catalysed reaction is reduced [plastocyanin] + hnu + oxidized [2Fe-2S]-[ferredoxin] = oxidized [plastocyanin] + reduced [2Fe-2S]-[ferredoxin]. In terms of biological role, psaA and PsaB bind P700, the primary electron donor of photosystem I (PSI), as well as the electron acceptors A0, A1 and FX. PSI is a plastocyanin-ferredoxin oxidoreductase, converting photonic excitation into a charge separation, which transfers an electron from the donor P700 chlorophyll pair to the spectroscopically characterized acceptors A0, A1, FX, FA and FB in turn. Oxidized P700 is reduced on the lumenal side of the thylakoid membrane by plastocyanin. This is Photosystem I P700 chlorophyll a apoprotein A1 from Equisetum palustre (Marsh horsetail).